The primary structure comprises 332 residues: GTP 3',8-cyclase (332 aa).

The Radical SAM core domain maps to 7–221 (SYDRLHDYVR…FDTCKDNGLA (215 aa)). Arg-16 is a binding site for GTP. Positions 23 and 27 each coordinate [4Fe-4S] cluster. Tyr-29 contacts S-adenosyl-L-methionine. Cys-30 is a [4Fe-4S] cluster binding site. Arg-66 is a binding site for GTP. Residue Gly-70 participates in S-adenosyl-L-methionine binding. Residue Thr-97 coordinates GTP. Ser-121 contributes to the S-adenosyl-L-methionine binding site. A GTP-binding site is contributed by Lys-158. Met-192 serves as a coordination point for S-adenosyl-L-methionine. 2 residues coordinate [4Fe-4S] cluster: Cys-256 and Cys-259. 261-263 (RLR) contributes to the GTP binding site. Cys-273 provides a ligand contact to [4Fe-4S] cluster.

It belongs to the radical SAM superfamily. MoaA family. As to quaternary structure, monomer and homodimer. It depends on [4Fe-4S] cluster as a cofactor.

It carries out the reaction GTP + AH2 + S-adenosyl-L-methionine = (8S)-3',8-cyclo-7,8-dihydroguanosine 5'-triphosphate + 5'-deoxyadenosine + L-methionine + A + H(+). Its pathway is cofactor biosynthesis; molybdopterin biosynthesis. Its function is as follows. Catalyzes the cyclization of GTP to (8S)-3',8-cyclo-7,8-dihydroguanosine 5'-triphosphate. In Lactiplantibacillus plantarum (strain ATCC BAA-793 / NCIMB 8826 / WCFS1) (Lactobacillus plantarum), this protein is GTP 3',8-cyclase.